The primary structure comprises 228 residues: Ribonuclease HII (228 aa).

One can recognise an RNase H type-2 domain in the interval 26 to 214 (RAVAGVDEVG…VRAHSRFPLD (189 aa)). The a divalent metal cation site is built by Asp-32, Glu-33, and Asp-124.

This sequence belongs to the RNase HII family. Mn(2+) is required as a cofactor. Requires Mg(2+) as cofactor.

The protein localises to the cytoplasm. The enzyme catalyses Endonucleolytic cleavage to 5'-phosphomonoester.. Its function is as follows. Endonuclease that specifically degrades the RNA of RNA-DNA hybrids. The protein is Ribonuclease HII of Solibacter usitatus (strain Ellin6076).